Here is a 279-residue protein sequence, read N- to C-terminus: MSTSVAERLAIKDEVDKKIELRPNWSEDELQIVFKTAYEQVFGRQGLYASQRFATAEALLRNGKISVKQFIELLAKSEFYKECFFYNNSQVRFIELNYKHLLGRAPYDQSEIAFHVDLYAAAGYDAEIESYIYSPEYDNAFGNFVVPYYRGFQSIPGMKTVGFNRIFELYRGRANSDNAQFGGKSARLRSKISMNLANTIVPPTSPIAASTSSARTLVTSPVMGDARMFIVEAIAGTLNTNVAVRRSRQVYTVPYDRLSATYQEIHKRGGKIVKITPAS.

In terms of domain architecture, PBS-linker spans 2 to 178; that stretch reads STSVAERLAI…LYRGRANSDN (177 aa). Residues 226-278 form the CpcD-like domain; the sequence is ARMFIVEAIAGTLNTNVAVRRSRQVYTVPYDRLSATYQEIHKRGGKIVKITPA.

This sequence belongs to the phycobilisome linker protein family.

Its subcellular location is the cellular thylakoid membrane. In terms of biological role, rod linker protein, associated with phycoerythrocyanin. Linker polypeptides determine the state of aggregation and the location of the disk-shaped phycobiliprotein units within the phycobilisome and modulate their spectroscopic properties in order to mediate a directed and optimal energy transfer. The chain is Phycobilisome 34.5 kDa linker polypeptide, phycoerythrocyanin-associated, rod (pecC) from Mastigocladus laminosus (Fischerella sp.).